The sequence spans 106 residues: ATP-dependent Clp protease adapter protein ClpS (106 aa).

The protein belongs to the ClpS family. Binds to the N-terminal domain of the chaperone ClpA.

Its function is as follows. Involved in the modulation of the specificity of the ClpAP-mediated ATP-dependent protein degradation. The sequence is that of ATP-dependent Clp protease adapter protein ClpS from Aliivibrio fischeri (strain ATCC 700601 / ES114) (Vibrio fischeri).